The primary structure comprises 70 residues: Sporulation protein YhaL (70 aa).

A helical membrane pass occupies residues 3 to 23 (FFPWWVYLCIVGIIFSAYKLV). The disordered stretch occupies residues 48–70 (MEKERERRSSQQHEEENQNHSIA).

Its subcellular location is the cell membrane. Functionally, required for efficient sporulation. The sequence is that of Sporulation protein YhaL (yhaL) from Bacillus subtilis (strain 168).